We begin with the raw amino-acid sequence, 615 residues long: Granule-bound starch synthase 1, chloroplastic/amyloplastic (615 aa).

A chloroplast-targeting transit peptide spans 1 to 70 (MAALVTSQLA…DRRCLSMVVR (70 aa)). Lys91 provides a ligand contact to ADP-alpha-D-glucose.

Belongs to the glycosyltransferase 1 family. Bacterial/plant glycogen synthase subfamily. As to expression, found in seeds and pollen.

It is found in the plastid. Its subcellular location is the chloroplast. The protein localises to the amyloplast. The enzyme catalyses an NDP-alpha-D-glucose + [(1-&gt;4)-alpha-D-glucosyl](n) = [(1-&gt;4)-alpha-D-glucosyl](n+1) + a ribonucleoside 5'-diphosphate + H(+). The protein operates within glycan biosynthesis; starch biosynthesis. This chain is Granule-bound starch synthase 1, chloroplastic/amyloplastic (WAXY), found in Triticum aestivum (Wheat).